The sequence spans 257 residues: Imidazole glycerol phosphate synthase subunit HisF (257 aa).

Catalysis depends on residues Asp11 and Asp130.

The protein belongs to the HisA/HisF family. In terms of assembly, heterodimer of HisH and HisF.

The protein resides in the cytoplasm. It carries out the reaction 5-[(5-phospho-1-deoxy-D-ribulos-1-ylimino)methylamino]-1-(5-phospho-beta-D-ribosyl)imidazole-4-carboxamide + L-glutamine = D-erythro-1-(imidazol-4-yl)glycerol 3-phosphate + 5-amino-1-(5-phospho-beta-D-ribosyl)imidazole-4-carboxamide + L-glutamate + H(+). The protein operates within amino-acid biosynthesis; L-histidine biosynthesis; L-histidine from 5-phospho-alpha-D-ribose 1-diphosphate: step 5/9. Its function is as follows. IGPS catalyzes the conversion of PRFAR and glutamine to IGP, AICAR and glutamate. The HisF subunit catalyzes the cyclization activity that produces IGP and AICAR from PRFAR using the ammonia provided by the HisH subunit. The protein is Imidazole glycerol phosphate synthase subunit HisF of Prochlorococcus marinus (strain SARG / CCMP1375 / SS120).